The primary structure comprises 148 residues: Putative nickel-responsive regulator (148 aa).

Histidine 88, histidine 99, histidine 101, and cysteine 107 together coordinate Ni(2+).

This sequence belongs to the transcriptional regulatory CopG/NikR family. Requires Ni(2+) as cofactor.

Transcriptional regulator. This chain is Putative nickel-responsive regulator, found in Helicobacter pylori (strain G27).